The sequence spans 209 residues: Large ribosomal subunit protein uL3 (209 aa).

Gln150 carries the N5-methylglutamine modification.

The protein belongs to the universal ribosomal protein uL3 family. As to quaternary structure, part of the 50S ribosomal subunit. Forms a cluster with proteins L14 and L19. In terms of processing, methylated by PrmB.

Its function is as follows. One of the primary rRNA binding proteins, it binds directly near the 3'-end of the 23S rRNA, where it nucleates assembly of the 50S subunit. In Vibrio cholerae serotype O1 (strain ATCC 39541 / Classical Ogawa 395 / O395), this protein is Large ribosomal subunit protein uL3.